A 103-amino-acid polypeptide reads, in one-letter code: Large ribosomal subunit protein bL21 (103 aa).

The protein belongs to the bacterial ribosomal protein bL21 family. Part of the 50S ribosomal subunit. Contacts protein L20.

This protein binds to 23S rRNA in the presence of protein L20. This Desulforudis audaxviator (strain MP104C) protein is Large ribosomal subunit protein bL21.